We begin with the raw amino-acid sequence, 320 residues long: Malate dehydrogenase (320 aa).

NAD(+)-binding positions include 10-15 (GAGMIG) and D34. Residues R83 and R89 each coordinate substrate. NAD(+)-binding positions include N96 and 119–121 (ITN). Positions 121 and 152 each coordinate substrate. H176 serves as the catalytic Proton acceptor.

It belongs to the LDH/MDH superfamily. MDH type 3 family.

It catalyses the reaction (S)-malate + NAD(+) = oxaloacetate + NADH + H(+). Functionally, catalyzes the reversible oxidation of malate to oxaloacetate. In Caulobacter sp. (strain K31), this protein is Malate dehydrogenase.